A 303-amino-acid chain; its full sequence is Taste receptor type 2 member 13 (303 aa).

The Extracellular segment spans residues 1-7 (MESALPS). The chain crosses the membrane as a helical span at residues 8–28 (ILTLVIIAEFIIGNLSNGFIV). The Cytoplasmic portion of the chain corresponds to 29–55 (LINYIDWVSKRELSSVDKLLIILAISR). Residues 56 to 76 (IGLIWEILVSWFLALHYLAIF) form a helical membrane-spanning segment. Residues 77-85 (VSGTGLRIM) are Extracellular-facing. The chain crosses the membrane as a helical span at residues 86 to 106 (IFSWIVSNHFSLWLATILSIF). Topologically, residues 107-128 (YLLKIASFSSPAFLYLKWRVNK) are cytoplasmic. A helical membrane pass occupies residues 129–149 (VILMILLGSLVFLFLNLIQIN). The Extracellular portion of the chain corresponds to 150 to 184 (IHIKDWLDRYEGNTTWNFSMSDFVTFSVSVKFTMT). N-linked (GlcNAc...) asparagine glycosylation is found at Asn-162 and Asn-166. The helical transmembrane segment at 185–205 (MFSLTPFTVALISFSLLIFSL) threads the bilayer. Residues 206 to 232 (QKHLQKMQLNYKGHREPRTKVHTNALK) lie on the Cytoplasmic side of the membrane. The chain crosses the membrane as a helical span at residues 233–253 (IVISFLLLYASFFLCILISWI). The Extracellular segment spans residues 254–261 (SELYQNTA). Residues 262–282 (IYMLCETIGLFYPSSHSFLLI) traverse the membrane as a helical segment. The Cytoplasmic portion of the chain corresponds to 283–303 (LGNPKLRQAFLLVAAKVWAKR).

It belongs to the G-protein coupled receptor T2R family.

The protein resides in the membrane. In terms of biological role, receptor that may play a role in the perception of bitterness and is gustducin-linked. May play a role in sensing the chemical composition of the gastrointestinal content. The activity of this receptor may stimulate alpha gustducin, mediate PLC-beta-2 activation and lead to the gating of TRPM5. In Pongo pygmaeus (Bornean orangutan), this protein is Taste receptor type 2 member 13 (TAS2R13).